Here is a 332-residue protein sequence, read N- to C-terminus: 2,3-diketo-L-gulonate reductase (332 aa).

Residue His44 is the Proton donor of the active site. Residues 168 to 174, 224 to 225, and 304 to 306 each bind NAD(+); these read ITMVDMS, WK, and GHE.

It belongs to the LDH2/MDH2 oxidoreductase family. DlgD subfamily. Homodimer.

Its subcellular location is the cytoplasm. It catalyses the reaction 3-dehydro-L-gulonate + NAD(+) = 2,3-dioxo-L-gulonate + NADH + H(+). The enzyme catalyses 3-dehydro-L-gulonate + NADP(+) = 2,3-dioxo-L-gulonate + NADPH + H(+). In terms of biological role, catalyzes the reduction of 2,3-diketo-L-gulonate in the presence of NADH, to form 3-keto-L-gulonate. This is 2,3-diketo-L-gulonate reductase from Shigella boydii serotype 4 (strain Sb227).